A 491-amino-acid polypeptide reads, in one-letter code: UDP-N-acetylmuramate--L-alanine ligase (491 aa).

Position 115–121 (115–121 (GTHGKTT)) interacts with ATP.

Belongs to the MurCDEF family.

Its subcellular location is the cytoplasm. It catalyses the reaction UDP-N-acetyl-alpha-D-muramate + L-alanine + ATP = UDP-N-acetyl-alpha-D-muramoyl-L-alanine + ADP + phosphate + H(+). The protein operates within cell wall biogenesis; peptidoglycan biosynthesis. In terms of biological role, cell wall formation. This Parvibaculum lavamentivorans (strain DS-1 / DSM 13023 / NCIMB 13966) protein is UDP-N-acetylmuramate--L-alanine ligase.